The sequence spans 475 residues: Ribulose bisphosphate carboxylase large chain (475 aa).

Residues 1-2 constitute a propeptide that is removed on maturation; the sequence is MS. Residue P3 is modified to N-acetylproline. An N6,N6,N6-trimethyllysine modification is found at K14. Substrate contacts are provided by N123 and T173. Catalysis depends on K175, which acts as the Proton acceptor. Residue K177 coordinates substrate. Mg(2+) is bound by residues K201, D203, and E204. K201 carries the post-translational modification N6-carboxylysine. The Proton acceptor role is filled by H294. R295, H327, and S379 together coordinate substrate.

Belongs to the RuBisCO large chain family. Type I subfamily. Heterohexadecamer of 8 large chains and 8 small chains; disulfide-linked. The disulfide link is formed within the large subunit homodimers. The cofactor is Mg(2+). Post-translationally, the disulfide bond which can form in the large chain dimeric partners within the hexadecamer appears to be associated with oxidative stress and protein turnover.

It is found in the plastid. Its subcellular location is the chloroplast. It catalyses the reaction 2 (2R)-3-phosphoglycerate + 2 H(+) = D-ribulose 1,5-bisphosphate + CO2 + H2O. It carries out the reaction D-ribulose 1,5-bisphosphate + O2 = 2-phosphoglycolate + (2R)-3-phosphoglycerate + 2 H(+). Functionally, ruBisCO catalyzes two reactions: the carboxylation of D-ribulose 1,5-bisphosphate, the primary event in carbon dioxide fixation, as well as the oxidative fragmentation of the pentose substrate in the photorespiration process. Both reactions occur simultaneously and in competition at the same active site. The chain is Ribulose bisphosphate carboxylase large chain from Adiantum capillus-veneris (Maidenhair fern).